Reading from the N-terminus, the 442-residue chain is MFS transporter asaE (442 aa).

The segment covering 1–10 has biased composition (polar residues); it reads MDRSRTSSQG. A disordered region spans residues 1–43; the sequence is MDRSRTSSQGRDVLPPRGDEGRISPSLDKEKSPGPEDQPDAPP. A compositionally biased stretch (basic and acidic residues) spans 17–34; that stretch reads RGDEGRISPSLDKEKSPG. Transmembrane regions (helical) follow at residues 47 to 67, 89 to 109, 119 to 139, 150 to 170, 177 to 197, 206 to 226, 252 to 272, 288 to 307, 319 to 339, 342 to 362, 381 to 401, and 413 to 433; these read LTAW…FGWV, TISW…PIVG, YLII…SIST, ICSA…VSAW, IAFA…PIMV, FGWS…IAIV, PVFI…FIPI, LASY…RLGA, IFIV…IPAT, APII…VSLS, LLFL…GAIL, and IFSG…RIVG.

Belongs to the major facilitator superfamily. Monocarboxylate porter (TC 2.A.1.13) family.

Its subcellular location is the cell membrane. It functions in the pathway secondary metabolite biosynthesis. Functionally, MFS transporter; part of the gene cluster that mediates the biosynthesis of aspergillic acid. Probably involved in aspergillic acid metabolism and transport. The chain is MFS transporter asaE from Aspergillus flavus (strain ATCC 200026 / FGSC A1120 / IAM 13836 / NRRL 3357 / JCM 12722 / SRRC 167).